Here is a 168-residue protein sequence, read N- to C-terminus: uncharacterized protein (168 aa).

The region spanning 1–166 (MRVLILAENE…FCGELIKILK (166 aa)) is the PfpI endopeptidase domain.

This sequence belongs to the peptidase C56 family.

This is an uncharacterized protein from Archaeoglobus fulgidus (strain ATCC 49558 / DSM 4304 / JCM 9628 / NBRC 100126 / VC-16).